Here is a 132-residue protein sequence, read N- to C-terminus: Small ribosomal subunit protein uS8 (132 aa).

This sequence belongs to the universal ribosomal protein uS8 family. In terms of assembly, part of the 30S ribosomal subunit. Contacts proteins S5 and S12.

In terms of biological role, one of the primary rRNA binding proteins, it binds directly to 16S rRNA central domain where it helps coordinate assembly of the platform of the 30S subunit. This chain is Small ribosomal subunit protein uS8, found in Psychrobacter sp. (strain PRwf-1).